We begin with the raw amino-acid sequence, 84 residues long: Mu-Sparatoxin-Hp1 (84 aa).

The first 20 residues, 1–20, serve as a signal peptide directing secretion; that stretch reads MKIAIVMTLLLVAFSTASFA. Residues 21 to 35 constitute a propeptide that is removed on maturation; the sequence is IEPIERAALDLVMAR. 3 cysteine pairs are disulfide-bonded: Cys54-Cys68, Cys61-Cys73, and Cys67-Cys78. Leu82 is subject to Leucine amide.

In terms of tissue distribution, expressed by the venom gland.

It localises to the secreted. In terms of biological role, weakly nhibits voltage-gated sodium channels Nav1.7/SCN9A. High concentration of the toxin (3 uM) inhibits Nav1.7/SCN9A currents by 79%. This is Mu-Sparatoxin-Hp1 from Heteropoda pingtungensis (Pingtung huntsman spider).